Here is a 344-residue protein sequence, read N- to C-terminus: Dihydroorotase (344 aa).

Zn(2+) contacts are provided by His-13 and His-15. Residues 15–17 (HVR) and Asn-41 each bind substrate. Residues Lys-99, His-136, and His-174 each contribute to the Zn(2+) site. Lys-99 carries the post-translational modification N6-carboxylysine. His-136 is a binding site for substrate. Leu-219 contacts substrate. Asp-247 is a binding site for Zn(2+). Asp-247 is a catalytic residue. Substrate contacts are provided by His-251 and Ala-263.

It belongs to the metallo-dependent hydrolases superfamily. DHOase family. Class II DHOase subfamily. In terms of assembly, homodimer. Zn(2+) is required as a cofactor.

The catalysed reaction is (S)-dihydroorotate + H2O = N-carbamoyl-L-aspartate + H(+). It participates in pyrimidine metabolism; UMP biosynthesis via de novo pathway; (S)-dihydroorotate from bicarbonate: step 3/3. In terms of biological role, catalyzes the reversible cyclization of carbamoyl aspartate to dihydroorotate. The polypeptide is Dihydroorotase (Azoarcus sp. (strain BH72)).